We begin with the raw amino-acid sequence, 78 residues long: uncharacterized protein (78 aa).

This is an uncharacterized protein from Dictyostelium discoideum (Social amoeba).